We begin with the raw amino-acid sequence, 339 residues long: Adenylosuccinate synthetase (339 aa).

Residues 12 to 18 (GDEGKGS) and 42 to 44 (GHS) each bind GTP. Asp13 serves as the catalytic Proton acceptor. Asp13 and Gly42 together coordinate Mg(2+). Residues 13 to 16 (DEGK), 40 to 43 (NAGH), Thr127, Arg141, Gln179, Thr194, and Arg256 contribute to the IMP site. His43 serves as the catalytic Proton donor. Position 252-258 (252-258 (TVTGRRR)) interacts with substrate. GTP is bound by residues Arg258, 284–286 (MLD), and 324–326 (KTG).

It belongs to the adenylosuccinate synthetase family. As to quaternary structure, homodimer. Mg(2+) is required as a cofactor.

It localises to the cytoplasm. The enzyme catalyses IMP + L-aspartate + GTP = N(6)-(1,2-dicarboxyethyl)-AMP + GDP + phosphate + 2 H(+). Its pathway is purine metabolism; AMP biosynthesis via de novo pathway; AMP from IMP: step 1/2. Functionally, plays an important role in the de novo pathway of purine nucleotide biosynthesis. Catalyzes the first committed step in the biosynthesis of AMP from IMP. This is Adenylosuccinate synthetase from Pyrococcus sp. (strain ST700).